Reading from the N-terminus, the 72-residue chain is Probable neurotoxin pcD-993 (72 aa).

The signal sequence occupies residues 1–19 (MNYLVMISFALLLVIGVES). Residues 21–72 (RDGYFVEPDNCVVHCMPSSEMCDRGCKHNGATSGSCKAFSKGGNACWCKGLR) enclose the LCN-type CS-alpha/beta domain. 3 cysteine pairs are disulfide-bonded: Cys35/Cys56, Cys42/Cys66, and Cys46/Cys68. Position 72 (Arg72) is a propeptide, removed by a carboxypeptidase.

The protein belongs to the long (3 C-C) scorpion toxin superfamily. Expressed by the venom gland.

It is found in the secreted. In Androctonus australis (Sahara scorpion), this protein is Probable neurotoxin pcD-993.